The sequence spans 135 residues: uncharacterized protein (135 aa).

Residues valine 35–serine 55 form a helical membrane-spanning segment.

It is found in the membrane. This is an uncharacterized protein from Saccharomyces cerevisiae (strain ATCC 204508 / S288c) (Baker's yeast).